A 249-amino-acid polypeptide reads, in one-letter code: MANDPIHQFQVSRWIPIDVGGVDLSFTNVSAFMVATVVVASGFLYLTSSGRGLIPTRLQSVSEMAYEFVATSLRDSAGSKGMKFFPFVFSLFMFVLVANFLGLFPYFYTVTSQIIVTFALAVLVIGTVIVYGFFKHGLGFLKLFVPSGVPGIIVPLVVAIEIISFLSRPISLSVRLFANMLAGHITLKVFAGFVVSLAALGPIGIGGAVLPLIMTVAITALEFLVAFLQAYVFTVLTCMYINDAVHPGH.

Transmembrane regions (helical) follow at residues 26–46 (FTNVSAFMVATVVVASGFLYL), 84–104 (FFPFVFSLFMFVLVANFLGLF), 114–134 (IIVTFALAVLVIGTVIVYGFF), 143–163 (LFVPSGVPGIIVPLVVAIEII), 193–213 (FVVSLAALGPIGIGGAVLPLI), and 216–236 (VAITALEFLVAFLQAYVFTVL).

The protein belongs to the ATPase A chain family. As to quaternary structure, F-type ATPases have 2 components, CF(1) - the catalytic core - and CF(0) - the membrane proton channel. CF(1) has five subunits: alpha(3), beta(3), gamma(1), delta(1), epsilon(1). CF(0) has three main subunits: a(1), b(2) and c(9-12). The alpha and beta chains form an alternating ring which encloses part of the gamma chain. CF(1) is attached to CF(0) by a central stalk formed by the gamma and epsilon chains, while a peripheral stalk is formed by the delta and b chains.

Its subcellular location is the cell inner membrane. Key component of the proton channel; it plays a direct role in the translocation of protons across the membrane. This Brucella anthropi (strain ATCC 49188 / DSM 6882 / CCUG 24695 / JCM 21032 / LMG 3331 / NBRC 15819 / NCTC 12168 / Alc 37) (Ochrobactrum anthropi) protein is ATP synthase subunit a 1.